The chain runs to 681 residues: DNA ligase (681 aa).

NAD(+) is bound by residues 45–49, 94–95, and glutamate 120; these read DFDFD and SL. The N6-AMP-lysine intermediate role is filled by lysine 122. The NAD(+) site is built by arginine 143, glutamate 177, lysine 289, and lysine 313. Residues cysteine 403, cysteine 406, cysteine 421, and cysteine 426 each coordinate Zn(2+). Positions 593–681 constitute a BRCT domain; that stretch reads ADQQPFAGQS…SLKIDFKNLI (89 aa).

It belongs to the NAD-dependent DNA ligase family. LigA subfamily. It depends on Mg(2+) as a cofactor. Requires Mn(2+) as cofactor.

The catalysed reaction is NAD(+) + (deoxyribonucleotide)n-3'-hydroxyl + 5'-phospho-(deoxyribonucleotide)m = (deoxyribonucleotide)n+m + AMP + beta-nicotinamide D-nucleotide.. Functionally, DNA ligase that catalyzes the formation of phosphodiester linkages between 5'-phosphoryl and 3'-hydroxyl groups in double-stranded DNA using NAD as a coenzyme and as the energy source for the reaction. It is essential for DNA replication and repair of damaged DNA. This is DNA ligase from Leptospira interrogans serogroup Icterohaemorrhagiae serovar copenhageni (strain Fiocruz L1-130).